A 378-amino-acid polypeptide reads, in one-letter code: Acetylornithine deacetylase (378 aa).

H76 is a binding site for Zn(2+). Residue D78 is part of the active site. Zn(2+) is bound at residue D108. Residue E140 is part of the active site. Residues E141, E165, and H351 each coordinate Zn(2+).

This sequence belongs to the peptidase M20A family. ArgE subfamily. In terms of assembly, homodimer. Zn(2+) is required as a cofactor. It depends on Co(2+) as a cofactor. The cofactor is glutathione.

The protein resides in the cytoplasm. The enzyme catalyses N(2)-acetyl-L-ornithine + H2O = L-ornithine + acetate. The protein operates within amino-acid biosynthesis; L-arginine biosynthesis; L-ornithine from N(2)-acetyl-L-ornithine (linear): step 1/1. In terms of biological role, catalyzes the hydrolysis of the amide bond of N(2)-acetylated L-amino acids. Cleaves the acetyl group from N-acetyl-L-ornithine to form L-ornithine, an intermediate in L-arginine biosynthesis pathway, and a branchpoint in the synthesis of polyamines. This Vibrio cholerae serotype O1 (strain ATCC 39541 / Classical Ogawa 395 / O395) protein is Acetylornithine deacetylase.